Reading from the N-terminus, the 254-residue chain is Isoprenyl transferase (254 aa).

Residue D24 is part of the active site. Residue D24 coordinates Mg(2+). Substrate contacts are provided by residues 25–28, W29, R37, H41, and 69–71; these read GNGR and SSE. N72 functions as the Proton acceptor in the catalytic mechanism. Substrate is bound by residues W73, R75, R192, and 198-200; that span reads RIS. E211 serves as a coordination point for Mg(2+).

It belongs to the UPP synthase family. Homodimer. Mg(2+) serves as cofactor.

Its function is as follows. Catalyzes the condensation of isopentenyl diphosphate (IPP) with allylic pyrophosphates generating different type of terpenoids. This is Isoprenyl transferase from Bordetella parapertussis (strain 12822 / ATCC BAA-587 / NCTC 13253).